We begin with the raw amino-acid sequence, 1199 residues long: Tubulin-specific chaperone D (1199 aa).

2 disordered regions span residues 1-23 (MALSEEPAAGAAEDPVEDPVEDA) and 337-361 (QHSIQNPREPVTQAETPDSDGQDDV). Over residues 14–23 (DPVEDPVEDA) the composition is skewed to acidic residues. HEAT repeat units follow at residues 368–406 (VIEQLLVGLKDKDTIVRWSAAKGIGRMAGRLPKELADDV), 603–639 (EHTAREVFPRLLSMTQSPDLHTRHGAVLACAEVARSL), 757–793 (AAAQEELVKLYLAELQSPEEMTRCGCALALGALPAFF), and 1111–1147 (GDVRRKVLLQLFLLLCHPFPVIRKNTASQVYEMVLTY).

Belongs to the TBCD family. As to quaternary structure, found in a complex with at least ARL2, PPP2CB, PPP2R1A, PPP2R2A, PPP2R5E and TBCD. Interacts with PPP2CB. Part of a supercomplex made of cofactors A to E. Cofactors A and D function by capturing and stabilizing tubulin in a quasi-native conformation. Cofactor E binds to the cofactor D-tubulin complex; interaction with cofactor C then causes the release of tubulin polypeptides that are committed to the native state. Interacts with ARL2; interaction is enhanced with the GDP-bound form of ARL2. Does not interact with ARL3, ARL4A and ARL4D. Interacts with beta tubulin. Interacts with TBCE.

The protein resides in the cell junction. The protein localises to the tight junction. It localises to the lateral cell membrane. Its subcellular location is the cytoplasm. It is found in the adherens junction. The protein resides in the cytoskeleton. The protein localises to the microtubule organizing center. It localises to the centrosome. In terms of biological role, tubulin-folding protein implicated in the first step of the tubulin folding pathway and required for tubulin complex assembly. Involved in the regulation of microtubule polymerization or depolymerization, it modulates microtubule dynamics by capturing GTP-bound beta-tubulin (TUBB). Its ability to interact with beta tubulin is regulated via its interaction with ARL2. Acts as a GTPase-activating protein (GAP) for ARL2. Induces microtubule disruption in absence of ARL2. Increases degradation of beta tubulin, when overexpressed in polarized cells. Promotes epithelial cell detachment, a process antagonized by ARL2. Induces tight adherens and tight junctions disassembly at the lateral cell membrane. Required for correct assembly and maintenance of the mitotic spindle, and proper progression of mitosis. Involved in neuron morphogenesis. In Bos taurus (Bovine), this protein is Tubulin-specific chaperone D (TBCD).